The primary structure comprises 467 residues: ATP synthase subunit beta (467 aa).

154–161 (GGAGVGKT) is a binding site for ATP.

The protein belongs to the ATPase alpha/beta chains family. As to quaternary structure, F-type ATPases have 2 components, CF(1) - the catalytic core - and CF(0) - the membrane proton channel. CF(1) has five subunits: alpha(3), beta(3), gamma(1), delta(1), epsilon(1). CF(0) has three main subunits: a(1), b(2) and c(9-12). The alpha and beta chains form an alternating ring which encloses part of the gamma chain. CF(1) is attached to CF(0) by a central stalk formed by the gamma and epsilon chains, while a peripheral stalk is formed by the delta and b chains.

It is found in the cell inner membrane. It catalyses the reaction ATP + H2O + 4 H(+)(in) = ADP + phosphate + 5 H(+)(out). Its function is as follows. Produces ATP from ADP in the presence of a proton gradient across the membrane. The catalytic sites are hosted primarily by the beta subunits. The chain is ATP synthase subunit beta from Leptospira borgpetersenii serovar Hardjo-bovis (strain JB197).